We begin with the raw amino-acid sequence, 655 residues long: Broad substrate specificity ATP-binding cassette transporter ABCG2 (655 aa).

Residues 1–395 are Cytoplasmic-facing; that stretch reads MSSNSYEVSI…KNLLGNPQAS (395 aa). The 250-residue stretch at 36 to 285 folds into the ABC transporter domain; that stretch reads LSFHNICYRV…FGAIGFRCEP (250 aa). Residues 79–86, 183–189, glutamate 210, and histidine 242 contribute to the ATP site; these read GPTGGGKS and RGVSGGE. The ABC transmembrane type-2 domain occupies 389 to 651; that stretch reads LGNPQASIAQ…TIAYLKLLFL (263 aa). A helical transmembrane segment spans residues 396–416; that stretch reads IAQLIVTVFLGLVIGAIFYDL. At 417 to 428 the chain is on the extracellular side; sequence KNDPAGIQNRAG. Residues 429–449 traverse the membrane as a helical segment; that stretch reads VLFFLTTNQCFSSVSAVELLV. Topologically, residues 450–477 are cytoplasmic; that stretch reads VEKKLFIHEYISGYYRVSSYFFGKLLSD. Residues 478–498 traverse the membrane as a helical segment; sequence LLPMRMLPSIIFTCITYFLLG. Over 499–506 the chain is Extracellular; the sequence is LKPKVEAF. Residues 507–527 form a helical membrane-spanning segment; sequence FIMMLTLMMVAYSASSMALAI. The Cytoplasmic portion of the chain corresponds to 528-535; the sequence is AAGQSVVS. Residues 536-556 form a helical membrane-spanning segment; sequence IATLLMTISFVFMMIFSGLLV. Residues 557 to 630 lie on the Extracellular side of the membrane; the sequence is NLKTVVPWLS…ISPWGLWKNH (74 aa). The cysteines at positions 592 and 608 are disulfide-linked. N-linked (GlcNAc...) asparagine glycans are attached at residues asparagine 596 and asparagine 600. Residues 631–651 traverse the membrane as a helical segment; sequence VALACMIVIFLTIAYLKLLFL. Topologically, residues 652–655 are cytoplasmic; that stretch reads KKFS.

Belongs to the ABC transporter superfamily. ABCG family. Eye pigment precursor importer (TC 3.A.1.204) subfamily. In terms of assembly, homodimer; disulfide-linked. The minimal functional unit is a homodimer, but the major oligomeric form in plasma membrane is a homotetramer with possibility of higher order oligomerization up to homododecamers. N-glycosylated. Glycosylation-deficient ABCG2 is normally expressed and functional. Post-translationally, phosphorylated. Phosphorylation may regulate the localization to the plasma membrane, the homooligomerization and therefore, the activity of the transporter.

The protein resides in the cell membrane. It is found in the apical cell membrane. Its subcellular location is the mitochondrion membrane. The enzyme catalyses ATP + H2O + xenobioticSide 1 = ADP + phosphate + xenobioticSide 2.. It catalyses the reaction urate(in) + ATP + H2O = urate(out) + ADP + phosphate + H(+). The catalysed reaction is indoxyl sulfate(in) + ATP + H2O = indoxyl sulfate(out) + ADP + phosphate + H(+). It carries out the reaction sphing-4-enine 1-phosphate(in) + ATP + H2O = sphing-4-enine 1-phosphate(out) + ADP + phosphate + H(+). The enzyme catalyses estrone 3-sulfate(in) + ATP + H2O = estrone 3-sulfate(out) + ADP + phosphate + H(+). It catalyses the reaction dehydroepiandrosterone 3-sulfate(in) + ATP + H2O = dehydroepiandrosterone 3-sulfate(out) + ADP + phosphate + H(+). The catalysed reaction is 4-methylumbelliferone sulfate(in) + ATP + H2O = 4-methylumbelliferone sulfate(out) + ADP + phosphate + H(+). It carries out the reaction 5,7-dimethyl-2-methylamino-4-(3-pyridylmethyl)-1,3-benzothiazol-6-yl beta-D-glucuronate(in) + ATP + H2O = 5,7-dimethyl-2-methylamino-4-(3-pyridylmethyl)-1,3-benzothiazol-6-yl beta-D-glucuronate(out) + ADP + phosphate + H(+). The enzyme catalyses 4-methylumbelliferone beta-D-glucuronate(in) + ATP + H2O = 4-methylumbelliferone beta-D-glucuronate(out) + ADP + phosphate + H(+). It catalyses the reaction 5,7-dimethyl-2-methylamino-4-(3-pyridylmethyl)-1,3-benzothiazol-6-yl sulfate(in) + ATP + H2O = 5,7-dimethyl-2-methylamino-4-(3-pyridylmethyl)-1,3-benzothiazol-6-yl sulfate(out) + ADP + phosphate + H(+). The catalysed reaction is 17beta-estradiol 17-O-(beta-D-glucuronate)(in) + ATP + H2O = 17beta-estradiol 17-O-(beta-D-glucuronate)(out) + ADP + phosphate + H(+). It carries out the reaction methotrexate(in) + ATP + H2O = methotrexate(out) + ADP + phosphate + H(+). The enzyme catalyses riboflavin(in) + ATP + H2O = riboflavin(out) + ADP + phosphate + H(+). It catalyses the reaction pheophorbide a(in) + ATP + H2O = pheophorbide a(out) + ADP + phosphate + H(+). The catalysed reaction is itaconate(in) + ATP + H2O = itaconate(out) + ADP + phosphate + H(+). In terms of biological role, broad substrate specificity ATP-dependent transporter of the ATP-binding cassette (ABC) family that actively extrudes a wide variety of physiological compounds, dietary toxins and xenobiotics from cells. Involved in porphyrin homeostasis, mediating the export of protoporphyrin IX (PPIX) from both mitochondria to cytosol and cytosol to extracellular space, it also functions in the cellular export of heme. Also mediates the efflux of sphingosine-1-P from cells. Acts as a urate exporter functioning in both renal and extrarenal urate excretion. In kidney, it also functions as a physiological exporter of the uremic toxin indoxyl sulfate. Also involved in the excretion of steroids like estrone 3-sulfate/E1S, 3beta-sulfooxy-androst-5-en-17-one/DHEAS, and other sulfate conjugates. Mediates the secretion of the riboflavin and biotin vitamins into milk. Extrudes pheophorbide a, a phototoxic porphyrin catabolite of chlorophyll, reducing its bioavailability. Plays an important role in the exclusion of xenobiotics from the brain. It confers to cells a resistance to multiple drugs and other xenobiotics including mitoxantrone, pheophorbide, camptothecin, methotrexate, azidothymidine, and the anthracyclines daunorubicin and doxorubicin, through the control of their efflux. In placenta, it limits the penetration of drugs from the maternal plasma into the fetus. May play a role in early stem cell self-renewal by blocking differentiation. In inflammatory macrophages, exports itaconate from the cytosol to the extracellular compartment and limits the activation of TFEB-dependent lysosome biogenesis involved in antibacterial innate immune response. The polypeptide is Broad substrate specificity ATP-binding cassette transporter ABCG2 (ABCG2) (Bos taurus (Bovine)).